Consider the following 1209-residue polypeptide: Zinc finger protein 804A (1209 aa).

Residues 57–81 form a C2H2-type zinc finger; it reads FYCELCDKQYYKHQEFDNHINSYDH. Positions 380-394 are enriched in basic and acidic residues; that stretch reads VKHNEASTTEVENKN. Disordered stretches follow at residues 380 to 401 and 792 to 860; these read VKHN…TLAP and PEEF…MKPQ. Basic residues predominate over residues 807–819; sequence KPKKKRRRKRGRF. 2 stretches are compositionally biased toward basic and acidic residues: residues 826–836 and 848–860; these read LELKENTDYPV and LISE…MKPQ.

The chain is Zinc finger protein 804A (ZNF804A) from Homo sapiens (Human).